We begin with the raw amino-acid sequence, 397 residues long: Alanine racemase, biosynthetic (397 aa).

K42 (proton acceptor; specific for D-alanine) is an active-site residue. K42 is subject to N6-(pyridoxal phosphate)lysine. R136 provides a ligand contact to substrate. The active-site Proton acceptor; specific for L-alanine is the Y257. M305 is a substrate binding site. The segment at 373 to 397 (ANRPTEAMSNPSRAKSRPMDKQALI) is disordered.

This sequence belongs to the alanine racemase family. Requires pyridoxal 5'-phosphate as cofactor.

It catalyses the reaction L-alanine = D-alanine. It functions in the pathway amino-acid biosynthesis; D-alanine biosynthesis; D-alanine from L-alanine: step 1/1. Its pathway is cell wall biogenesis; peptidoglycan biosynthesis. Functionally, catalyzes the interconversion of L-alanine and D-alanine. Provides the D-alanine required for cell wall biosynthesis. The sequence is that of Alanine racemase, biosynthetic (alr) from Mesorhizobium japonicum (strain LMG 29417 / CECT 9101 / MAFF 303099) (Mesorhizobium loti (strain MAFF 303099)).